The primary structure comprises 163 residues: D-aminoacyl-tRNA deacylase (163 aa).

The short motif at 141–142 (GP) is the Gly-cisPro motif, important for rejection of L-amino acids element.

The protein belongs to the DTD family. In terms of assembly, homodimer.

It localises to the cytoplasm. The catalysed reaction is glycyl-tRNA(Ala) + H2O = tRNA(Ala) + glycine + H(+). It catalyses the reaction a D-aminoacyl-tRNA + H2O = a tRNA + a D-alpha-amino acid + H(+). Its function is as follows. An aminoacyl-tRNA editing enzyme that deacylates mischarged D-aminoacyl-tRNAs. Also deacylates mischarged glycyl-tRNA(Ala), protecting cells against glycine mischarging by AlaRS. Acts via tRNA-based rather than protein-based catalysis; rejects L-amino acids rather than detecting D-amino acids in the active site. By recycling D-aminoacyl-tRNA to D-amino acids and free tRNA molecules, this enzyme counteracts the toxicity associated with the formation of D-aminoacyl-tRNA entities in vivo and helps enforce protein L-homochirality. The chain is D-aminoacyl-tRNA deacylase from Neisseria meningitidis serogroup B (strain ATCC BAA-335 / MC58).